Reading from the N-terminus, the 329-residue chain is Mas-related G-protein coupled receptor member X2 (329 aa).

Over 1–33 (MDPTTPAWRTESTTMNGNDQALPLLCGKEILIS) the chain is Extracellular. A helical membrane pass occupies residues 34–54 (VFLILFIALVGLVGNGFVLWL). Residues 55 to 63 (LGFRMRRNA) lie on the Cytoplasmic side of the membrane. A helical membrane pass occupies residues 64 to 84 (FSVYVLSLAGADFLFLCFQII). Residues 85–96 (NCLVYLSNFFCS) lie on the Extracellular side of the membrane. The chain crosses the membrane as a helical span at residues 97 to 117 (SSINFPSFFTTVMTCAYLAGL). At 118–144 (SMLSTISTERCLSVLWPIWYRCRRPRH) the chain is on the cytoplasmic side. A helical transmembrane segment spans residues 145 to 165 (LSAVACVLLWALSLLLSILEG). Residues 166–183 (KFCGLFGDGDSGWCQTFD) are Extracellular-facing. A helical transmembrane segment spans residues 184–204 (LITAAWLIFLFMVLCGSSLAL). The Cytoplasmic segment spans residues 205–227 (LVRILCGSRGLPLTRLYLTILLT). The chain crosses the membrane as a helical span at residues 228–248 (VLVFLLCGLPFGIQWFLILWI). At 249 to 263 (WKNSDVLFCHIHPVS) the chain is on the extracellular side. Residues 264 to 284 (VVLSSLNSSANPIIYFFVGSF) form a helical membrane-spanning segment. At 285-329 (RKQWQLQQPILKLALQRALQDIAEVDHSEGCFRQGTPEMSRSSLV) the chain is on the cytoplasmic side.

This sequence belongs to the G-protein coupled receptor 1 family. Mas subfamily.

Its subcellular location is the cell membrane. Its function is as follows. Mast cell-specific receptor for basic secretagogues, i.e. cationic amphiphilic drugs, as well as endo- or exogenous peptides, consisting of a basic head group and a hydrophobic core. Recognizes and binds small molecules containing a cyclized tetrahydroisoquinoline (THIQ), such as non-steroidal neuromuscular blocking drugs (NMBDs), including tubocurarine and atracurium. In response to these compounds, mediates pseudo-allergic reactions characterized by histamine release, inflammation and airway contraction. This chain is Mas-related G-protein coupled receptor member X2 (MRGPRX2), found in Gorilla gorilla gorilla (Western lowland gorilla).